The following is a 418-amino-acid chain: Probable serine/threonine-protein kinase nek2 (418 aa).

The Protein kinase domain occupies 4–264 (YEILGALGKG…VNELLGYSFI (261 aa)). ATP is bound by residues 10-18 (LGKGSFGVV) and Lys33. Residue Asp135 is the Proton acceptor of the active site. A coiled-coil region spans residues 278-363 (QGLKQMDEDL…SNLSLNCNNS (86 aa)).

Belongs to the protein kinase superfamily. NEK Ser/Thr protein kinase family. NIMA subfamily.

It catalyses the reaction L-seryl-[protein] + ATP = O-phospho-L-seryl-[protein] + ADP + H(+). The enzyme catalyses L-threonyl-[protein] + ATP = O-phospho-L-threonyl-[protein] + ADP + H(+). Its function is as follows. Involved in centrosome biogenesis. Seems to be required for recruitment of centrosomal material and might be involved in de novo centrosome formation. The polypeptide is Probable serine/threonine-protein kinase nek2 (nek2) (Dictyostelium discoideum (Social amoeba)).